The chain runs to 602 residues: Elongation factor 4 (602 aa).

A tr-type G domain is found at 7-190 (KHIRNFCIVA…AVVQKVPAPS (184 aa)). Residues 19-24 (DHGKST) and 137-140 (NKID) contribute to the GTP site.

It belongs to the TRAFAC class translation factor GTPase superfamily. Classic translation factor GTPase family. LepA subfamily.

It is found in the cell membrane. The enzyme catalyses GTP + H2O = GDP + phosphate + H(+). Functionally, required for accurate and efficient protein synthesis under certain stress conditions. May act as a fidelity factor of the translation reaction, by catalyzing a one-codon backward translocation of tRNAs on improperly translocated ribosomes. Back-translocation proceeds from a post-translocation (POST) complex to a pre-translocation (PRE) complex, thus giving elongation factor G a second chance to translocate the tRNAs correctly. Binds to ribosomes in a GTP-dependent manner. This is Elongation factor 4 from Clostridium acetobutylicum (strain ATCC 824 / DSM 792 / JCM 1419 / IAM 19013 / LMG 5710 / NBRC 13948 / NRRL B-527 / VKM B-1787 / 2291 / W).